Consider the following 166-residue polypeptide: Protein-export protein SecB (166 aa).

It belongs to the SecB family. As to quaternary structure, homotetramer, a dimer of dimers. One homotetramer interacts with 1 SecA dimer.

It localises to the cytoplasm. Its function is as follows. One of the proteins required for the normal export of preproteins out of the cell cytoplasm. It is a molecular chaperone that binds to a subset of precursor proteins, maintaining them in a translocation-competent state. It also specifically binds to its receptor SecA. The chain is Protein-export protein SecB from Sinorhizobium fredii (strain NBRC 101917 / NGR234).